A 121-amino-acid polypeptide reads, in one-letter code: Protein FAM241B (121 aa).

Residues Q12–G58 are disordered. A compositionally biased stretch (polar residues) spans R19–F35. Position 33 is a phosphoserine (S33). Positions P48 to G58 are enriched in low complexity. S62 is modified (phosphoserine). A helical membrane pass occupies residues I92–V112.

Belongs to the FAM241 family.

It localises to the membrane. May play a role in lysosome homeostasis. This chain is Protein FAM241B, found in Homo sapiens (Human).